Reading from the N-terminus, the 206-residue chain is Ribonuclease HII (206 aa).

One can recognise an RNase H type-2 domain in the interval 19 to 206 (ALIAGVDEVG…GPVKRALGIE (188 aa)). A divalent metal cation is bound by residues Asp-25, Glu-26, and Asp-117.

It belongs to the RNase HII family. Requires Mn(2+) as cofactor. The cofactor is Mg(2+).

It localises to the cytoplasm. The catalysed reaction is Endonucleolytic cleavage to 5'-phosphomonoester.. Its function is as follows. Endonuclease that specifically degrades the RNA of RNA-DNA hybrids. This Vibrio cholerae serotype O1 (strain M66-2) protein is Ribonuclease HII.